The sequence spans 37 residues: Large ribosomal subunit protein bL36 (37 aa).

The protein belongs to the bacterial ribosomal protein bL36 family.

The chain is Large ribosomal subunit protein bL36 from Caldicellulosiruptor saccharolyticus (strain ATCC 43494 / DSM 8903 / Tp8T 6331).